Reading from the N-terminus, the 173-residue chain is Shikimate kinase (173 aa).

Residue 11–16 coordinates ATP; sequence GTGKTS. A Mg(2+)-binding site is contributed by threonine 15. Aspartate 33, arginine 57, and glycine 79 together coordinate substrate. An ATP-binding site is contributed by arginine 117. Residue arginine 136 coordinates substrate.

The protein belongs to the shikimate kinase family. In terms of assembly, monomer. Requires Mg(2+) as cofactor.

The protein localises to the cytoplasm. It catalyses the reaction shikimate + ATP = 3-phosphoshikimate + ADP + H(+). It functions in the pathway metabolic intermediate biosynthesis; chorismate biosynthesis; chorismate from D-erythrose 4-phosphate and phosphoenolpyruvate: step 5/7. In terms of biological role, catalyzes the specific phosphorylation of the 3-hydroxyl group of shikimic acid using ATP as a cosubstrate. The chain is Shikimate kinase from Thermodesulfovibrio yellowstonii (strain ATCC 51303 / DSM 11347 / YP87).